We begin with the raw amino-acid sequence, 65 residues long: uncharacterized protein (65 aa).

The protein localises to the plastid. It localises to the chloroplast. This is an uncharacterized protein from Porphyra purpurea (Red seaweed).